Consider the following 817-residue polypeptide: Leucine--tRNA ligase (817 aa).

A 'HIGH' region motif is present at residues 40–50 (PYPSGKLHMGH). The short motif at 578-582 (KMSKS) is the 'KMSKS' region element. K581 lines the ATP pocket.

It belongs to the class-I aminoacyl-tRNA synthetase family.

The protein resides in the cytoplasm. It catalyses the reaction tRNA(Leu) + L-leucine + ATP = L-leucyl-tRNA(Leu) + AMP + diphosphate. The sequence is that of Leucine--tRNA ligase from Caldicellulosiruptor saccharolyticus (strain ATCC 43494 / DSM 8903 / Tp8T 6331).